The chain runs to 487 residues: L-tartrate/succinate antiporter (487 aa).

Transmembrane regions (helical) follow at residues 10–30 (YLAPLAVIAIIALLPLPAGLE), 33–53 (TWLYFAVFTGVIVGLILEPVP), 54–74 (GAVVAMVGISIIAILSPWLLF), 93–113 (WAVSGFSNSVIWLIFAAFMFG), 137–157 (TLFLGYAVMFSELILAPVTPS), 189–209 (IGSYIMWMGIVADCVTSAIFL), 236–256 (FLGMLPLSILLVLLVPWLAYV), 292–312 (LMVGALVLWIFGGDYIDAAMV), 313–333 (GYSVVALMLLLRIICWDDIVS), 340–360 (VFFWLASLITLATGLNNTGFI), 370–390 (SLSGYSPTIVMVALIVVFYLL), 393–413 (FFASATAYTSALAPMMIAAAL), 418–438 (IPLPVFCLMVGAAIGLGSILT), and 462–482 (LGAIFGLIFLVLLVITGLLWM).

This sequence belongs to the SLC13A/DASS transporter (TC 2.A.47) family. DIT1 subfamily.

The protein resides in the cell inner membrane. It catalyses the reaction (2R,3R)-tartrate(out) + succinate(in) = (2R,3R)-tartrate(in) + succinate(out). Catalyzes the uptake of tartrate in exchange for intracellular succinate. Essential for anaerobic L-tartrate fermentation. This Escherichia coli O6:H1 (strain CFT073 / ATCC 700928 / UPEC) protein is L-tartrate/succinate antiporter (ttdT).